Consider the following 364-residue polypeptide: CCA-adding enzyme (364 aa).

Positions 19 and 22 each coordinate ATP. Glycine 19 and arginine 22 together coordinate CTP. Residues aspartate 32 and aspartate 34 each contribute to the Mg(2+) site. ATP contacts are provided by arginine 102, arginine 148, and arginine 151. The CTP site is built by arginine 102, arginine 148, and arginine 151.

It belongs to the tRNA nucleotidyltransferase/poly(A) polymerase family. Bacterial CCA-adding enzyme type 2 subfamily. Requires Mg(2+) as cofactor.

It catalyses the reaction a tRNA precursor + 2 CTP + ATP = a tRNA with a 3' CCA end + 3 diphosphate. The catalysed reaction is a tRNA with a 3' CCA end + 2 CTP + ATP = a tRNA with a 3' CCACCA end + 3 diphosphate. Functionally, catalyzes the addition and repair of the essential 3'-terminal CCA sequence in tRNAs without using a nucleic acid template. Adds these three nucleotides in the order of C, C, and A to the tRNA nucleotide-73, using CTP and ATP as substrates and producing inorganic pyrophosphate. tRNA 3'-terminal CCA addition is required both for tRNA processing and repair. Also involved in tRNA surveillance by mediating tandem CCA addition to generate a CCACCA at the 3' terminus of unstable tRNAs. While stable tRNAs receive only 3'-terminal CCA, unstable tRNAs are marked with CCACCA and rapidly degraded. This Bordetella pertussis (strain Tohama I / ATCC BAA-589 / NCTC 13251) protein is CCA-adding enzyme.